The chain runs to 252 residues: Sororin (252 aa).

Disordered regions lie at residues M1–T48 and A72–V142. S21, S33, S35, S75, S79, and S83 each carry phosphoserine. The span at L86–K104 shows a compositional bias: basic and acidic residues. The KEN box signature appears at K88 to N90. T98 bears the Phosphothreonine mark. The segment covering T105–P116 has biased composition (low complexity). S107 bears the Phosphoserine mark. T111 and T115 each carry phosphothreonine. A compositionally biased stretch (basic and acidic residues) spans S124–K140. At S154 the chain carries Phosphoserine. T159 carries the phosphothreonine modification. An FGF motif motif is present at residues F166 to F168. Residues W199 to M222 form a disordered region. S209 carries the post-translational modification Phosphoserine. The tract at residues L230–E252 is C-terminal Sororin domain.

This sequence belongs to the sororin family. Interacts with the APC/C complex. Interacts with the chromatin-bound cohesin complex; the interaction is indirect, occurs after DNA replication and requires acetylation of the cohesin component SMC3. Interacts (via the FGF motif) with PDS5A and PDS5B; the interaction is direct and prevents the interaction of PDS5A with WAPL. Post-translationally, phosphorylated. Phosphorylation, as cells enter mitosis, disrupts the interaction with PDS5A and relieves the inhibition of WAPL by CDCA5. In terms of processing, ubiquitinated by the APC/C complex in G1, leading to its degradation.

Its subcellular location is the nucleus. The protein resides in the chromosome. It localises to the cytoplasm. Its function is as follows. Regulator of sister chromatid cohesion in mitosis stabilizing cohesin complex association with chromatin. May antagonize the action of WAPL which stimulates cohesin dissociation from chromatin. Cohesion ensures that chromosome partitioning is accurate in both meiotic and mitotic cells and plays an important role in DNA repair. Required for efficient DNA double-stranded break repair. This Homo sapiens (Human) protein is Sororin (CDCA5).